Here is a 325-residue protein sequence, read N- to C-terminus: Gamma-hemolysin component B (325 aa).

The signal sequence occupies residues 1 to 26; that stretch reads MKMNKLVKSSVATSMALLLLSGTANA.

Belongs to the aerolysin family. As to quaternary structure, toxicity requires sequential binding and synergistic association of a class S and a class F component which form heterooligomeric complexes. HlgB (class F) associates with either hlgA thus forming an AB toxin or with hlgC thus forming a CB toxin. Interacts with host AMFR.

Its subcellular location is the secreted. In terms of biological role, toxin that seems to act by forming pores in the membrane of the cell. Has a hemolytic and a leucotoxic activity. Promotes host AMFR-mediated inflammation by mediating 'Lys-27'-linked ubiquitination of TAB3, TAK1-TAB3 complex formation and phosphorylation of TAK1/MAP3K7. In turn, activates host NF-kappa-B signaling pathway. This chain is Gamma-hemolysin component B (hlgB), found in Staphylococcus aureus (strain NCTC 8325 / PS 47).